The chain runs to 104 residues: Large ribosomal subunit protein uL24 (104 aa).

The protein belongs to the universal ribosomal protein uL24 family. In terms of assembly, part of the 50S ribosomal subunit.

One of two assembly initiator proteins, it binds directly to the 5'-end of the 23S rRNA, where it nucleates assembly of the 50S subunit. Functionally, one of the proteins that surrounds the polypeptide exit tunnel on the outside of the subunit. This chain is Large ribosomal subunit protein uL24, found in Photobacterium profundum (strain SS9).